The sequence spans 201 residues: Testis-expressed protein 38 (201 aa).

A helical transmembrane segment spans residues 3–23 (ISLCIGFLGLCSVLIGSCILF).

Its subcellular location is the membrane. The chain is Testis-expressed protein 38 (Tex38) from Mus musculus (Mouse).